Reading from the N-terminus, the 338-residue chain is Transcription factor AP-4 (338 aa).

A bHLH domain is found at 48–99 (IRREIANSNERRRMQSINAGFQSLKTLIPHTDGEKLSKAAILQQTAEYIFSL). The tract at residues 100–120 (EQEKTRLLQQNTQLKRFIQEL) is leucine-zipper 1. The disordered stretch occupies residues 118–141 (QELSGSSPKRRRAEDKDEGIGSPD). 3 positions are modified to phosphoserine: serine 123, serine 124, and serine 139. A Glycyl lysine isopeptide (Lys-Gly) (interchain with G-Cter in SUMO2) cross-link involves residue lysine 147. The tract at residues 151–179 (LRREMIELRQQLDKERSVRMMLEEQVRSL) is leucine-zipper 2. Glycyl lysine isopeptide (Lys-Gly) (interchain with G-Cter in SUMO2) cross-links involve residues lysine 187, lysine 189, and lysine 285. A compositionally biased stretch (basic and acidic residues) spans 283–294 (QEKQELEEEQRR). The disordered stretch occupies residues 283-338 (QEKQELEEEQRRAVIVKPVRSCPEAPTSDTASDSEASDSDAMDQSREEPSGDGELP).

In terms of assembly, efficient DNA binding requires dimerization with another bHLH protein. Homodimer.

Its subcellular location is the nucleus. Its function is as follows. Transcription factor that activates both viral and cellular genes by binding to the symmetrical DNA sequence 5'-CAGCTG-3'. This is Transcription factor AP-4 (TFAP4) from Homo sapiens (Human).